The primary structure comprises 301 residues: Zinc finger protein 346 (301 aa).

2 Matrin-type zinc fingers span residues 55 to 85 (SQCKVCSAVLISESQKLAHYQSKKHASKVRR) and 117 to 141 (KACSVCNMTFSSPVVAQSHYQGKVH). Cys57, Cys60, His73, His79, Cys119, Cys122, His135, and His141 together coordinate Zn(2+). The interval 151-177 (GSQTPALPQPEAQAKKDDGMQGPAEQD) is disordered. 2 Matrin-type zinc fingers span residues 180–210 (RFCSICQASFNNPLMAQQHYSGKKHKKHMNK) and 230–257 (YPCTVCNIELNSVEQYQAHISGSKHKNH). Positions 250-283 (SGSKHKNHAKPKKGPNAFAPPPDNYQPDYQYPTN) are disordered. The span at 251–262 (GSKHKNHAKPKK) shows a compositional bias: basic residues.

The protein localises to the nucleus. Its subcellular location is the cytoplasm. Its function is as follows. Binds preferentially to dsRNA, but also to RNA-DNA hybrids. This chain is Zinc finger protein 346, found in Danio rerio (Zebrafish).